The primary structure comprises 185 residues: Elongation factor P (185 aa).

Belongs to the elongation factor P family.

It localises to the cytoplasm. It functions in the pathway protein biosynthesis; polypeptide chain elongation. Functionally, involved in peptide bond synthesis. Stimulates efficient translation and peptide-bond synthesis on native or reconstituted 70S ribosomes in vitro. Probably functions indirectly by altering the affinity of the ribosome for aminoacyl-tRNA, thus increasing their reactivity as acceptors for peptidyl transferase. This is Elongation factor P from Clostridium tetani (strain Massachusetts / E88).